Consider the following 346-residue polypeptide: Histidinol-phosphate aminotransferase (346 aa).

Lys209 is subject to N6-(pyridoxal phosphate)lysine.

It belongs to the class-II pyridoxal-phosphate-dependent aminotransferase family. Histidinol-phosphate aminotransferase subfamily. Homodimer. Requires pyridoxal 5'-phosphate as cofactor.

The catalysed reaction is L-histidinol phosphate + 2-oxoglutarate = 3-(imidazol-4-yl)-2-oxopropyl phosphate + L-glutamate. It participates in amino-acid biosynthesis; L-histidine biosynthesis; L-histidine from 5-phospho-alpha-D-ribose 1-diphosphate: step 7/9. This Flavobacterium psychrophilum (strain ATCC 49511 / DSM 21280 / CIP 103535 / JIP02/86) protein is Histidinol-phosphate aminotransferase.